Reading from the N-terminus, the 885-residue chain is Leucine--tRNA ligase (885 aa).

A 'HIGH' region motif is present at residues 48–58; sequence PYPSGKLHMGH. Positions 639-643 match the 'KMSKS' region motif; sequence TMSKS. Residue Lys642 participates in ATP binding.

It belongs to the class-I aminoacyl-tRNA synthetase family.

The protein resides in the cytoplasm. The catalysed reaction is tRNA(Leu) + L-leucine + ATP = L-leucyl-tRNA(Leu) + AMP + diphosphate. The protein is Leucine--tRNA ligase of Bordetella pertussis (strain Tohama I / ATCC BAA-589 / NCTC 13251).